Here is a 718-residue protein sequence, read N- to C-terminus: Auxin response factor 2 (718 aa).

Positions methionine 1–valine 24 are disordered. A compositionally biased stretch (acidic residues) spans threonine 8–glycine 18. Positions phenylalanine 147–alanine 249 form a DNA-binding region, TF-B3.

This sequence belongs to the ARF family. As to quaternary structure, homo and heterodimers. In terms of tissue distribution, expressed in roots, culms, leaves and young panicles.

The protein resides in the nucleus. Auxin response factors (ARFs) are transcriptional factors that bind specifically to the DNA sequence 5'-TGTCTC-3' found in the auxin-responsive promoter elements (AuxREs). The polypeptide is Auxin response factor 2 (ARF2) (Oryza sativa subsp. japonica (Rice)).